The sequence spans 99 residues: Small ribosomal subunit protein bS20 (99 aa).

Belongs to the bacterial ribosomal protein bS20 family.

In terms of biological role, binds directly to 16S ribosomal RNA. The polypeptide is Small ribosomal subunit protein bS20 (Chlamydia pneumoniae (Chlamydophila pneumoniae)).